The chain runs to 137 residues: Putative pre-16S rRNA nuclease (137 aa).

The protein belongs to the YqgF nuclease family.

It localises to the cytoplasm. Its function is as follows. Could be a nuclease involved in processing of the 5'-end of pre-16S rRNA. This is Putative pre-16S rRNA nuclease from Oceanobacillus iheyensis (strain DSM 14371 / CIP 107618 / JCM 11309 / KCTC 3954 / HTE831).